Consider the following 549-residue polypeptide: Adhesion G protein-coupled receptor G3 (549 aa).

The first 20 residues, 1–20, serve as a signal peptide directing secretion; the sequence is MATPRGLGALLLLLLLPTSG. Topologically, residues 21 to 270 are extracellular; that stretch reads QEKPTEGPRN…DQSTVHILTR (250 aa). Residues Asn98, Asn144, and Asn210 are each glycosylated (N-linked (GlcNAc...) asparagine). The GAIN-B domain maps to 107-262; the sequence is FYFSLEPSQV…ALLLRPTLDQ (156 aa). 2 disulfide bridges follow: Cys215-Cys244 and Cys233-Cys246. A GPS region spans residues 215-262; that stretch reads CVFWDVTKGTTGDWSSEGCSTEVRPEGTVCCCDHLTFFALLLRPTLDQ. The tract at residues 251–259 is stachel; the sequence is FFALLLRPT. Residues 271 to 295 traverse the membrane as a helical segment; that stretch reads ISQAGCGVSMIFLAFTIILYAFLRL. Topologically, residues 296-304 are cytoplasmic; sequence SRERFKSED. The chain crosses the membrane as a helical span at residues 305–326; the sequence is APKIHVALGGSLFLLNLAFLVN. Residues 327–338 are Extracellular-facing; that stretch reads VGSGSKGSDAAC. Cys338 and Cys420 are joined by a disulfide. A helical transmembrane segment spans residues 339–364; sequence WARGAVFHYFLLCAFTWMGLEAFHLY. Topologically, residues 365–378 are cytoplasmic; sequence LLAVRVFNTYFGHY. A helical membrane pass occupies residues 379 to 400; the sequence is FLKLSLVGWGLPALMVIGTGSA. At 401–428 the chain is on the extracellular side; it reads NSYGLYTIRDRENRTSLELCWFREGTTM. An N-linked (GlcNAc...) asparagine glycan is attached at Asn413. The chain crosses the membrane as a helical span at residues 429–454; the sequence is YALYITVHGYFLITFLFGMVVLALVV. Residues 455 to 474 lie on the Cytoplasmic side of the membrane; it reads WKIFTLSRATAVKERGKNRK. A helical membrane pass occupies residues 475 to 495; it reads KVLTLLGLSSLVGVTWGLAIF. Residues 496–501 are Extracellular-facing; the sequence is TPLGLS. A helical membrane pass occupies residues 502 to 525; sequence TVYIFALFNSLQGVFICCWFTILY. Position 510 (Asn510) interacts with cortisol. Residues 526 to 549 are Cytoplasmic-facing; sequence LPSQSTTVSSSTARLDQAHSASQE.

It belongs to the G-protein coupled receptor 2 family. Adhesion G-protein coupled receptor (ADGR) subfamily. As to quaternary structure, heterodimer of 2 chains generated by proteolytic processing; the large extracellular N-terminal fragment and the membrane-bound C-terminal fragment predominantly remain associated and non-covalently linked. Interacts with PRTN3; this interaction induces the activation of PAR2. Interacts with GNAO1 (when palmitoylated). Post-translationally, autoproteolytically processed at the GPS region of the GAIN-B domain; this cleavage modulates receptor activity. In terms of processing, O- and N-glycosylated. In terms of tissue distribution, expressed in cultured primary dermal lymphatic endothelial cells. Highly expressed in polymorphonuclear cells (PMNs) including neutrophilic, eosinophilic, and basophilic granulocytes.

The protein resides in the cell membrane. With respect to regulation, forms a heterodimer of 2 chains generated by proteolytic processing that remain associated through non-covalent interactions mediated by the GAIN-B domain. In the inactivated receptor, the Stachel sequence (also named stalk) is embedded in the GAIN-B domain, where it adopts a beta-strand conformation. On activation, the Stachel moves into the 7 transmembrane region and adopts a twisted hook-shaped configuration that forms contacts within the receptor, leading to coupling of a G-alpha protein, which activates signaling. The cleaved GAIN-B and N-terminal domains can then dissociate from the rest of the receptor. Functionally, adhesion G-protein coupled receptor (aGPCR) for glucocorticoid hormones such as cortisol, cortisone and 11-deoxycortisol. Ligand binding causes a conformation change that triggers signaling via guanine nucleotide-binding proteins (G proteins) and modulates the activity of downstream effectors, such as adenylate cyclase. ADGRG3/GPR97 is coupled to G(o)/GNAO1 G proteins and mediates signaling by inhibiting adenylate cyclase activity. May also signal through G-alpha(q)-proteins; additional evidence are however required to confirm this result in vivo. Plays a role in the regulation of various processes including B-cell development, inflammation or innate immunity. Regulates migration of lymphatic endothelial cells in vitro via the small GTPases RhoA and CDC42. Antibody ligation leads to the production and activation of antimicrobial mediators like reactive oxygen species (ROS) and myeloperoxidase (MPO) as well as enhanced bacteria uptake and killing by granulocytes. Additionally, collaborates with protease-activated receptor 2/PAR2 to stimulate neutrophil-driven antimicrobial responses and endothelial cell activation. This Homo sapiens (Human) protein is Adhesion G protein-coupled receptor G3.